A 191-amino-acid chain; its full sequence is Protein Ves (191 aa).

It belongs to the Ves family.

This chain is Protein Ves, found in Escherichia coli O139:H28 (strain E24377A / ETEC).